Consider the following 636-residue polypeptide: Threonine--tRNA ligase (636 aa).

The region spanning 1–61 (MLKITLKDGS…NENCEVEILS (61 aa)) is the TGS domain. The segment at 244-534 (EHRKLGKELD…LIEHYEGKFP (291 aa)) is catalytic. Zn(2+) is bound by residues Cys335, His386, and His511.

This sequence belongs to the class-II aminoacyl-tRNA synthetase family. Homodimer. Requires Zn(2+) as cofactor.

It is found in the cytoplasm. It catalyses the reaction tRNA(Thr) + L-threonine + ATP = L-threonyl-tRNA(Thr) + AMP + diphosphate + H(+). Its function is as follows. Catalyzes the attachment of threonine to tRNA(Thr) in a two-step reaction: L-threonine is first activated by ATP to form Thr-AMP and then transferred to the acceptor end of tRNA(Thr). Also edits incorrectly charged L-seryl-tRNA(Thr). The protein is Threonine--tRNA ligase of Natranaerobius thermophilus (strain ATCC BAA-1301 / DSM 18059 / JW/NM-WN-LF).